The primary structure comprises 1032 residues: Probable LRR receptor-like serine/threonine-protein kinase At1g56130 (1032 aa).

An N-terminal signal peptide occupies residues 1–29 (MTRIRRSPCLLLLIIWFMCIAGSVQVVQS). The Extracellular segment spans residues 30–636 (QNQTGATTHP…PPSKGKNRTG (607 aa)). N-linked (GlcNAc...) asparagine glycans are attached at residues Asn31, Asn61, and Asn95. LRR repeat units follow at residues 101–122 (ITNI…LWTL), 123–146 (TYLT…IGNL), 148–170 (RMQW…IGLL), 171–194 (TDLR…IGRC), 196–217 (KLQQ…SFAN), 242–265 (WTKL…SFSN), 290–314 (MKSL…IGEH), 315–338 (SSLR…LFNL), 340–360 (QLTH…TQKT), and 361–385 (QSLR…SLPS). N-linked (GlcNAc...) asparagine glycosylation is present at Asn145. Asn182 carries N-linked (GlcNAc...) asparagine glycosylation. 5 N-linked (GlcNAc...) asparagine glycosylation sites follow: Asn265, Asn302, Asn337, Asn348, and Asn352. N-linked (GlcNAc...) asparagine glycans are attached at residues Asn394, Asn580, and Asn633. The helical transmembrane segment at 637-657 (TIVGVIVGVGLLSILAGVVMF) threads the bilayer. Over 658–1032 (TIRKRRKRYT…MLGSKINEGR (375 aa)) the chain is Cytoplasmic. Thr683 bears the Phosphothreonine mark. The Protein kinase domain maps to 694-968 (FDPSNKLGEG…VAMLSGDVEI (275 aa)). Residues 700 to 708 (LGEGGFGPV) and Lys722 each bind ATP. A Phosphotyrosine modification is found at Tyr767. The active-site Proton acceptor is the Asp818. Residues Ser822 and Ser851 each carry the phosphoserine modification. A phosphothreonine mark is found at Thr852 and Thr857. Tyr865 is modified (phosphotyrosine). The interval 1008-1032 (APGSEISPRDSDFKPMLGSKINEGR) is disordered.

This sequence belongs to the protein kinase superfamily. Ser/Thr protein kinase family.

It localises to the cell membrane. The catalysed reaction is L-seryl-[protein] + ATP = O-phospho-L-seryl-[protein] + ADP + H(+). It catalyses the reaction L-threonyl-[protein] + ATP = O-phospho-L-threonyl-[protein] + ADP + H(+). The sequence is that of Probable LRR receptor-like serine/threonine-protein kinase At1g56130 from Arabidopsis thaliana (Mouse-ear cress).